The following is a 291-amino-acid chain: Kidney mitochondrial carrier protein 1 (291 aa).

Ser-2 is subject to N-acetylserine. 3 Solcar repeats span residues 7-96, 104-189, and 198-289; these read KPFV…LKRL, ETLL…TKKH, and DTVA…LKKL. A run of 6 helical transmembrane segments spans residues 9 to 26, 71 to 89, 106 to 124, 164 to 183, 204 to 224, and 264 to 283; these read FVYG…TFPI, GIAP…KIGT, LLVN…SAIA, GVSL…LPVY, FLSS…VDVV, and GFWP…FLTY.

The protein belongs to the mitochondrial carrier (TC 2.A.29) family. Interacts with VDAC1. Present in kidney (at protein level). Expressed predominantly within the kidney cortex in the proximal and distal tubules and at lower levels in the testis and white adipose tissue.

Its subcellular location is the mitochondrion inner membrane. It catalyses the reaction sulfite(in) + sulfate(out) = sulfite(out) + sulfate(in). The enzyme catalyses thiosulfate(in) + sulfate(out) = thiosulfate(out) + sulfate(in). It carries out the reaction sulfate(out) + phosphate(in) = sulfate(in) + phosphate(out). The catalysed reaction is oxalate(in) + sulfate(out) = oxalate(out) + sulfate(in). It catalyses the reaction malonate(in) + sulfate(out) = malonate(out) + sulfate(in). The enzyme catalyses maleate(in) + sulfate(out) = maleate(out) + sulfate(in). It carries out the reaction (S)-malate(in) + sulfate(out) = (S)-malate(out) + sulfate(in). The catalysed reaction is (3S)-citramalate(in) + sulfate(out) = (3S)-citramalate(out) + sulfate(in). It catalyses the reaction (3R)-citramalate(in) + sulfate(out) = (3R)-citramalate(out) + sulfate(in). The enzyme catalyses sulfate(out) + succinate(in) = sulfate(in) + succinate(out). It carries out the reaction (S,S)-tartrate(in) + sulfate(out) = (S,S)-tartrate(out) + sulfate(in). The catalysed reaction is (2R,3R)-tartrate(in) + sulfate(out) = (2R,3R)-tartrate(out) + sulfate(in). It catalyses the reaction D-aspartate(in) + sulfate(out) = D-aspartate(out) + sulfate(in). The enzyme catalyses L-aspartate(in) + sulfate(out) = L-aspartate(out) + sulfate(in). It carries out the reaction sulfate(in) = sulfate(out). The catalysed reaction is phosphate(in) = phosphate(out). It catalyses the reaction (S)-malate(out) = (S)-malate(in). In terms of biological role, antiporter that transports inorganic anions (sulfate, sulfite, thiosulfate and phosphate) and, to a lesser extent, a variety of dicarboxylates (e.g. malonate, malate and citramalate) and, even more so, aspartate. The sulfate/sulfate exchange is much higher than the phosphate/phosphate and malate/malate exchanges. The transport affinities is higher for sulfate and thiosulfate than for any other substrate. May catalyze the export of sulfite and thiosulfate (the hydrogen sulfide degradation products) from the mitochondria, thereby modulating the level of the hydrogen sulfide. Also may mediate a very low unidirectional transport of sulfate, phosphate and (S)-malate. The chain is Kidney mitochondrial carrier protein 1 from Mus musculus (Mouse).